Here is a 659-residue protein sequence, read N- to C-terminus: Heparin-sulfate lyase (659 aa).

An N-terminal signal peptide occupies residues 1 to 24 (MTTKIFKRIIVFAVIALSSGNILA). Tyr-294 functions as the Proton acceptor in the catalytic mechanism.

It belongs to the polysaccharide lyase 12 family.

It is found in the periplasm. The catalysed reaction is Elimination of sulfate, appears to act on linkages between N-acetyl-D-glucosamine and uronate. Product is an unsaturated sugar.. Specifically cleaves heparan sulfate-rich regions of acidic polysaccharides. Does not act on N,O-desulfated glucosamine or N-acetyl-O-sulfated glucosamine linkages. Functions in cleaving metazoan heparan sulfate and providing carbon, nitrogen and sulfate sources for microorganisms. This Pedobacter heparinus (strain ATCC 13125 / DSM 2366 / CIP 104194 / JCM 7457 / NBRC 12017 / NCIMB 9290 / NRRL B-14731 / HIM 762-3) protein is Heparin-sulfate lyase (hepC).